A 123-amino-acid polypeptide reads, in one-letter code: U9-barytoxin-Tl1a (123 aa).

The first 18 residues, 1 to 18 (MNTMITFLVLFVLTAANG), serve as a signal peptide directing secretion. Positions 19–77 (APEANERKIPEAIHNEDQSLAEMAEELMFFLQQTEFEAPLLQEEEEAEXAEXRNSRERR) are excised as a propeptide. Cystine bridges form between C78/C93, C85/C98, and C92/C112.

It belongs to the neurotoxin 14 (magi-1) family. 05 (ICK-7) subfamily. ICK-7 sub-subfamily. Expressed by the venom gland.

The protein resides in the secreted. Ion channel inhibitor. This chain is U9-barytoxin-Tl1a, found in Trittame loki (Brush-footed trapdoor spider).